Consider the following 165-residue polypeptide: MHCPFCRHPDSRVVDSREADEGQAIRRRRSCPECGRRFTTVETAVLSVVKRSGVTEPFSREKVVKGVRRACQGRQVDNDSLNLLAQQVEDAVRASGSAEIPSNEVGLAILDPLRNLDEVAYLRFASVYKSFSSAADFEREITDMREHAETRAADKASGAETVSVD.

A zinc finger spans residues 3 to 34 (CPFCRHPDSRVVDSREADEGQAIRRRRSCPEC). The ATP-cone domain maps to 46–136 (LSVVKRSGVT…VYKSFSSAAD (91 aa)).

Belongs to the NrdR family. It depends on Zn(2+) as a cofactor.

Functionally, negatively regulates transcription of bacterial ribonucleotide reductase nrd genes and operons by binding to NrdR-boxes. This Rhodococcus erythropolis (strain PR4 / NBRC 100887) protein is Transcriptional repressor NrdR.